The chain runs to 70 residues: Large ribosomal subunit protein bL31 (70 aa).

Zn(2+) contacts are provided by cysteine 16, cysteine 18, cysteine 37, and cysteine 40.

Belongs to the bacterial ribosomal protein bL31 family. Type A subfamily. In terms of assembly, part of the 50S ribosomal subunit. The cofactor is Zn(2+).

In terms of biological role, binds the 23S rRNA. This chain is Large ribosomal subunit protein bL31, found in Klebsiella pneumoniae (strain 342).